The chain runs to 435 residues: Xylose isomerase (435 aa).

Active-site residues include histidine 99 and aspartate 102. Mg(2+) is bound by residues glutamate 230, glutamate 266, histidine 269, aspartate 294, aspartate 305, aspartate 307, and aspartate 337.

Belongs to the xylose isomerase family. As to quaternary structure, homotetramer. It depends on Mg(2+) as a cofactor.

The protein resides in the cytoplasm. It carries out the reaction alpha-D-xylose = alpha-D-xylulofuranose. This is Xylose isomerase from Listeria welshimeri serovar 6b (strain ATCC 35897 / DSM 20650 / CCUG 15529 / CIP 8149 / NCTC 11857 / SLCC 5334 / V8).